The sequence spans 78 residues: Conotoxin 1 (78 aa).

Residues 1–22 (MKLTCMMFVAVLFLTASVFITA) form the signal peptide. Positions 23–51 (DDSRNGIENLPRMRRHEMKNPKASKLNKR) are excised as a propeptide. Gln52 carries the post-translational modification Pyrrolidone carboxylic acid. 3 cysteine pairs are disulfide-bonded: Cys53–Cys69, Cys60–Cys73, and Cys68–Cys77.

It belongs to the conotoxin O1 superfamily. As to expression, expressed by the venom duct.

The protein resides in the secreted. The polypeptide is Conotoxin 1 (Conus imperialis (Imperial cone)).